An 881-amino-acid chain; its full sequence is Alanine--tRNA ligase (881 aa).

The Zn(2+) site is built by His566, His570, Cys668, and His672.

Belongs to the class-II aminoacyl-tRNA synthetase family. The cofactor is Zn(2+).

Its subcellular location is the cytoplasm. It carries out the reaction tRNA(Ala) + L-alanine + ATP = L-alanyl-tRNA(Ala) + AMP + diphosphate. Functionally, catalyzes the attachment of alanine to tRNA(Ala) in a two-step reaction: alanine is first activated by ATP to form Ala-AMP and then transferred to the acceptor end of tRNA(Ala). Also edits incorrectly charged Ser-tRNA(Ala) and Gly-tRNA(Ala) via its editing domain. This is Alanine--tRNA ligase from Frankia casuarinae (strain DSM 45818 / CECT 9043 / HFP020203 / CcI3).